Reading from the N-terminus, the 283-residue chain is Thymidylate synthase (283 aa).

Residue arginine 22 coordinates dUMP. Cysteine 160 (nucleophile) is an active-site residue. DUMP contacts are provided by residues 180-183 (RSAD), asparagine 191, and 221-223 (HIY). Residue aspartate 183 coordinates (6R)-5,10-methylene-5,6,7,8-tetrahydrofolate. (6R)-5,10-methylene-5,6,7,8-tetrahydrofolate is bound at residue serine 282.

The protein belongs to the thymidylate synthase family. Bacterial-type ThyA subfamily. In terms of assembly, homodimer.

It is found in the cytoplasm. It catalyses the reaction dUMP + (6R)-5,10-methylene-5,6,7,8-tetrahydrofolate = 7,8-dihydrofolate + dTMP. The protein operates within pyrimidine metabolism; dTTP biosynthesis. Functionally, catalyzes the reductive methylation of 2'-deoxyuridine-5'-monophosphate (dUMP) to 2'-deoxythymidine-5'-monophosphate (dTMP) while utilizing 5,10-methylenetetrahydrofolate (mTHF) as the methyl donor and reductant in the reaction, yielding dihydrofolate (DHF) as a by-product. This enzymatic reaction provides an intracellular de novo source of dTMP, an essential precursor for DNA biosynthesis. This Glaesserella parasuis serovar 5 (strain SH0165) (Haemophilus parasuis) protein is Thymidylate synthase.